A 290-amino-acid chain; its full sequence is MALSRPLPSWLRKPLGKASEISTVQRLVRQYGIHTICEEGRCPNRGECYGQKTATFLLLGPTCTRACAFCQVEKGHAPAAVDPEEPTKIAAAVATLGLRYVVLTSVARDDLPDQGAGQFVATMAAIRQRCPGTEIEVLSPDFRMDRGRLSQRDCIAQIVAAQPACYNHNLETVRRLQGPVRRGATYESSLRVLATVKELNPDIPTKSGLMLGLGETEAEIIETLKDLRRVGCDRLTLGQYLPPSLSHLPVVKYWTPEEFNTLGNIARELGFSHVRSGPLVRSSYHAAEGG.

Positions 37, 42, 48, 63, 67, 70, and 283 each coordinate [4Fe-4S] cluster. Positions 49-272 constitute a Radical SAM core domain; it reads YGQKTATFLL…GNIARELGFS (224 aa).

Belongs to the radical SAM superfamily. Lipoyl synthase family. [4Fe-4S] cluster serves as cofactor.

It is found in the cytoplasm. It carries out the reaction [[Fe-S] cluster scaffold protein carrying a second [4Fe-4S](2+) cluster] + N(6)-octanoyl-L-lysyl-[protein] + 2 oxidized [2Fe-2S]-[ferredoxin] + 2 S-adenosyl-L-methionine + 4 H(+) = [[Fe-S] cluster scaffold protein] + N(6)-[(R)-dihydrolipoyl]-L-lysyl-[protein] + 4 Fe(3+) + 2 hydrogen sulfide + 2 5'-deoxyadenosine + 2 L-methionine + 2 reduced [2Fe-2S]-[ferredoxin]. It participates in protein modification; protein lipoylation via endogenous pathway; protein N(6)-(lipoyl)lysine from octanoyl-[acyl-carrier-protein]: step 2/2. Functionally, catalyzes the radical-mediated insertion of two sulfur atoms into the C-6 and C-8 positions of the octanoyl moiety bound to the lipoyl domains of lipoate-dependent enzymes, thereby converting the octanoylated domains into lipoylated derivatives. The sequence is that of Lipoyl synthase 2 from Thermosynechococcus vestitus (strain NIES-2133 / IAM M-273 / BP-1).